The following is a 127-amino-acid chain: MASIDELVEEIGKLTLTEASELVKALEEKFGVSAAPVMVAGGAMPGAAGAAEAPAEEKTEFDVVLKSAGASKINVIKVVRAATGLGLKEAKAVVDEAPSTVKEAMPKADAEKLVKELKEAGAEAEMK.

Belongs to the bacterial ribosomal protein bL12 family. In terms of assembly, homodimer. Part of the ribosomal stalk of the 50S ribosomal subunit. Forms a multimeric L10(L12)X complex, where L10 forms an elongated spine to which 2 to 4 L12 dimers bind in a sequential fashion. Binds GTP-bound translation factors.

Forms part of the ribosomal stalk which helps the ribosome interact with GTP-bound translation factors. Is thus essential for accurate translation. This chain is Large ribosomal subunit protein bL12, found in Chloroherpeton thalassium (strain ATCC 35110 / GB-78).